Here is a 353-residue protein sequence, read N- to C-terminus: Paraxanthine methyltransferase 2 (353 aa).

Tyrosine 18 is a binding site for S-adenosyl-L-methionine. Substrate is bound by residues tyrosine 18 and 21-25; that span reads QSSYQ. Residues glycine 59, 59 to 60, asparagine 65, 99 to 102, 128 to 130, and 145 to 147 contribute to the S-adenosyl-L-methionine site; these read GC, FNDL, SFF, and SYA. 146 to 150 is a substrate binding site; sequence YAFLF. Residues asparagine 167, aspartate 252, and phenylalanine 254 each coordinate Mg(2+). Residues serine 301 and tyrosine 306 each contribute to the substrate site.

It belongs to the methyltransferase superfamily. SABATH family. Homodimer. Requires Mg(2+) as cofactor.

The protein is Paraxanthine methyltransferase 2 of Arabidopsis thaliana (Mouse-ear cress).